A 582-amino-acid chain; its full sequence is Adenine deaminase (582 aa).

The protein belongs to the metallo-dependent hydrolases superfamily. Adenine deaminase family. It depends on Mn(2+) as a cofactor.

The enzyme catalyses adenine + H2O + H(+) = hypoxanthine + NH4(+). This is Adenine deaminase from Oceanobacillus iheyensis (strain DSM 14371 / CIP 107618 / JCM 11309 / KCTC 3954 / HTE831).